Consider the following 413-residue polypeptide: Cardiolipin synthase B (413 aa).

2 consecutive PLD phosphodiesterase domains span residues 108–135 (IFRRMHRKIVVIDDRIAFVGGINYSAEH) and 285–312 (RRRPLHGKVALMDDHWATVGSSNLDPLS). Active-site residues include histidine 113, lysine 115, aspartate 120, histidine 290, lysine 292, and aspartate 297. The tract at residues 388–413 (AQVPPPAQPEMETQDRVDPENSGVKP) is disordered.

It belongs to the phospholipase D family. Cardiolipin synthase subfamily. ClsB sub-subfamily.

The protein resides in the cell membrane. It carries out the reaction 2 a 1,2-diacyl-sn-glycero-3-phospho-(1'-sn-glycerol) = a cardiolipin + glycerol. Catalyzes the phosphatidyl group transfer from one phosphatidylglycerol molecule to another to form cardiolipin (CL) (diphosphatidylglycerol) and glycerol. This is Cardiolipin synthase B from Salmonella typhi.